We begin with the raw amino-acid sequence, 328 residues long: Global transcription regulator sge1 (328 aa).

2 disordered regions span residues 94–120 (PGEK…PRQR) and 251–293 (QMHQ…QYVH). Low complexity-rich tracts occupy residues 106–116 (KSTTQSGGISK), 251–261 (QMHQPQVHQPL), and 282–293 (AHQPQVHQQYVH).

Belongs to the MIT1/WOR1 family.

The protein localises to the nucleus. Global transcriptional regulator of transcription that impacts, but is not absolutely required for secondary metabolism and pathogenicity on maize. Regulates synthesis of multiple secondary metabolites, including fumonisins and fusarins. The chain is Global transcription regulator sge1 from Gibberella moniliformis (strain M3125 / FGSC 7600) (Maize ear and stalk rot fungus).